The chain runs to 211 residues: MDSIAQLRKNYTFGQLSETEVPHHPLPLFQLWFDQAVKAECPEPNSMTLATADKAGNPSARIVLLKGADQNGFTFFTNYESQKGQDLAVRPQAALLFHWHELERQVRIKGLVERVSATESDEYFHSRPPASRIGAWASPQSAAIPNREFLEEAEKRFKSEFGEAPPRPEHWGGYRLRPTEMEFWQGRPSRLHDRIHYKLDGSNWKVTRLAP.

Substrate-binding positions include 8-11 (RKNY) and Lys-66. FMN contacts are provided by residues 61-66 (RIVLLK), 76-77 (FT), Lys-83, and Gln-105. Residues Tyr-123, Arg-127, and Ser-131 each coordinate substrate. FMN contacts are provided by residues 140–141 (QS) and Trp-184. 190–192 (RLH) provides a ligand contact to substrate. Arg-194 serves as a coordination point for FMN.

This sequence belongs to the pyridoxamine 5'-phosphate oxidase family. In terms of assembly, homodimer. FMN is required as a cofactor.

The catalysed reaction is pyridoxamine 5'-phosphate + O2 + H2O = pyridoxal 5'-phosphate + H2O2 + NH4(+). It carries out the reaction pyridoxine 5'-phosphate + O2 = pyridoxal 5'-phosphate + H2O2. The protein operates within cofactor metabolism; pyridoxal 5'-phosphate salvage; pyridoxal 5'-phosphate from pyridoxamine 5'-phosphate: step 1/1. It participates in cofactor metabolism; pyridoxal 5'-phosphate salvage; pyridoxal 5'-phosphate from pyridoxine 5'-phosphate: step 1/1. Functionally, catalyzes the oxidation of either pyridoxine 5'-phosphate (PNP) or pyridoxamine 5'-phosphate (PMP) into pyridoxal 5'-phosphate (PLP). This is Pyridoxine/pyridoxamine 5'-phosphate oxidase from Polynucleobacter asymbioticus (strain DSM 18221 / CIP 109841 / QLW-P1DMWA-1) (Polynucleobacter necessarius subsp. asymbioticus).